A 242-amino-acid polypeptide reads, in one-letter code: 3-deoxy-manno-octulosonate cytidylyltransferase (242 aa).

This sequence belongs to the KdsB family.

The protein resides in the cytoplasm. The catalysed reaction is 3-deoxy-alpha-D-manno-oct-2-ulosonate + CTP = CMP-3-deoxy-beta-D-manno-octulosonate + diphosphate. The protein operates within nucleotide-sugar biosynthesis; CMP-3-deoxy-D-manno-octulosonate biosynthesis; CMP-3-deoxy-D-manno-octulosonate from 3-deoxy-D-manno-octulosonate and CTP: step 1/1. It functions in the pathway bacterial outer membrane biogenesis; lipopolysaccharide biosynthesis. Activates KDO (a required 8-carbon sugar) for incorporation into bacterial lipopolysaccharide in Gram-negative bacteria. The sequence is that of 3-deoxy-manno-octulosonate cytidylyltransferase from Anaeromyxobacter sp. (strain K).